The sequence spans 494 residues: Protein nucleotidyltransferase YdiU (494 aa).

ATP contacts are provided by glycine 101, glycine 103, arginine 104, lysine 123, aspartate 135, glycine 136, arginine 186, and arginine 193. Aspartate 262 functions as the Proton acceptor in the catalytic mechanism. Mg(2+)-binding residues include asparagine 263 and aspartate 272. Aspartate 272 provides a ligand contact to ATP.

This sequence belongs to the SELO family. Mg(2+) is required as a cofactor. Requires Mn(2+) as cofactor.

The enzyme catalyses L-seryl-[protein] + ATP = 3-O-(5'-adenylyl)-L-seryl-[protein] + diphosphate. It carries out the reaction L-threonyl-[protein] + ATP = 3-O-(5'-adenylyl)-L-threonyl-[protein] + diphosphate. It catalyses the reaction L-tyrosyl-[protein] + ATP = O-(5'-adenylyl)-L-tyrosyl-[protein] + diphosphate. The catalysed reaction is L-histidyl-[protein] + UTP = N(tele)-(5'-uridylyl)-L-histidyl-[protein] + diphosphate. The enzyme catalyses L-seryl-[protein] + UTP = O-(5'-uridylyl)-L-seryl-[protein] + diphosphate. It carries out the reaction L-tyrosyl-[protein] + UTP = O-(5'-uridylyl)-L-tyrosyl-[protein] + diphosphate. Its function is as follows. Nucleotidyltransferase involved in the post-translational modification of proteins. It can catalyze the addition of adenosine monophosphate (AMP) or uridine monophosphate (UMP) to a protein, resulting in modifications known as AMPylation and UMPylation. The chain is Protein nucleotidyltransferase YdiU from Chromohalobacter salexigens (strain ATCC BAA-138 / DSM 3043 / CIP 106854 / NCIMB 13768 / 1H11).